The following is a 734-amino-acid chain: Photosystem I P700 chlorophyll a apoprotein A2 (734 aa).

The next 8 helical transmembrane spans lie at isoleucine 46–alanine 69, leucine 135–glutamine 158, leucine 175–isoleucine 199, isoleucine 273–tyrosine 291, isoleucine 330–tyrosine 353, alanine 369–isoleucine 395, alanine 417–histidine 439, and phenylalanine 517–valine 535. [4Fe-4S] cluster is bound by residues cysteine 559 and cysteine 568. 2 helical membrane passes run alanine 575 to tryptophan 596 and leucine 643 to isoleucine 665. Residues histidine 654, methionine 662, and tyrosine 670 each contribute to the chlorophyll a site. Tryptophan 671 lines the phylloquinone pocket. A helical membrane pass occupies residues leucine 707 to alanine 727.

The protein belongs to the PsaA/PsaB family. As to quaternary structure, the PsaA/B heterodimer binds the P700 chlorophyll special pair and subsequent electron acceptors. PSI consists of a core antenna complex that captures photons, and an electron transfer chain that converts photonic excitation into a charge separation. The eukaryotic PSI reaction center is composed of at least 11 subunits. P700 is a chlorophyll a/chlorophyll a' dimer, A0 is one or more chlorophyll a, A1 is one or both phylloquinones and FX is a shared 4Fe-4S iron-sulfur center. is required as a cofactor.

The protein resides in the plastid. Its subcellular location is the chloroplast thylakoid membrane. It carries out the reaction reduced [plastocyanin] + hnu + oxidized [2Fe-2S]-[ferredoxin] = oxidized [plastocyanin] + reduced [2Fe-2S]-[ferredoxin]. Functionally, psaA and PsaB bind P700, the primary electron donor of photosystem I (PSI), as well as the electron acceptors A0, A1 and FX. PSI is a plastocyanin-ferredoxin oxidoreductase, converting photonic excitation into a charge separation, which transfers an electron from the donor P700 chlorophyll pair to the spectroscopically characterized acceptors A0, A1, FX, FA and FB in turn. Oxidized P700 is reduced on the lumenal side of the thylakoid membrane by plastocyanin. The sequence is that of Photosystem I P700 chlorophyll a apoprotein A2 from Vitis vinifera (Grape).